The chain runs to 705 residues: Elongation factor G (705 aa).

In terms of domain architecture, tr-type G spans 8-289; the sequence is VNYRNIGISA…TVINYLPSPK (282 aa). Residues 17-24, 88-92, and 142-145 contribute to the GTP site; these read AHIDAGKT, DTPGH, and NKMD.

Belongs to the TRAFAC class translation factor GTPase superfamily. Classic translation factor GTPase family. EF-G/EF-2 subfamily.

It is found in the cytoplasm. Functionally, catalyzes the GTP-dependent ribosomal translocation step during translation elongation. During this step, the ribosome changes from the pre-translocational (PRE) to the post-translocational (POST) state as the newly formed A-site-bound peptidyl-tRNA and P-site-bound deacylated tRNA move to the P and E sites, respectively. Catalyzes the coordinated movement of the two tRNA molecules, the mRNA and conformational changes in the ribosome. This Wigglesworthia glossinidia brevipalpis protein is Elongation factor G.